Reading from the N-terminus, the 195-residue chain is MSNPITITESAQSHFAKLLAQQPEGTNIRVFVVNPGTQNAECGVSYCPPEAVEATDTEYPFSGFSAYVDGLSLPFLEEAVIDFVTDKMGSQLTLKAPNAKMRKVSDDASLMERVEYALQTQVNPQLAGHGGHVRLISISDDGVALVQFGGGCNGCSMVDVTLKEGIEKELLAQFAGELTAVRDSTEHDRGEHSYY.

2 residues coordinate [4Fe-4S] cluster: Cys152 and Cys155.

It belongs to the NfuA family. In terms of assembly, homodimer. The cofactor is [4Fe-4S] cluster.

Involved in iron-sulfur cluster biogenesis. Binds a 4Fe-4S cluster, can transfer this cluster to apoproteins, and thereby intervenes in the maturation of Fe/S proteins. Could also act as a scaffold/chaperone for damaged Fe/S proteins. This Vibrio cholerae serotype O1 (strain ATCC 39541 / Classical Ogawa 395 / O395) protein is Fe/S biogenesis protein NfuA.